Consider the following 261-residue polypeptide: tRNA (guanine-N(7)-)-methyltransferase (261 aa).

Residues glutamate 75, glutamate 100, aspartate 127, and aspartate 150 each contribute to the S-adenosyl-L-methionine site. Residue aspartate 150 is part of the active site. Residue lysine 154 coordinates substrate. The interval arginine 156–arginine 161 is interaction with RNA. Residues aspartate 186 and threonine 223–glutamate 226 each bind substrate.

This sequence belongs to the class I-like SAM-binding methyltransferase superfamily. TrmB family.

The enzyme catalyses guanosine(46) in tRNA + S-adenosyl-L-methionine = N(7)-methylguanosine(46) in tRNA + S-adenosyl-L-homocysteine. Its pathway is tRNA modification; N(7)-methylguanine-tRNA biosynthesis. Its function is as follows. Catalyzes the formation of N(7)-methylguanine at position 46 (m7G46) in tRNA. In Xanthomonas axonopodis pv. citri (strain 306), this protein is tRNA (guanine-N(7)-)-methyltransferase.